The sequence spans 377 residues: Anhydro-N-acetylmuramic acid kinase (377 aa).

18–25 (GTSADGID) serves as a coordination point for ATP.

The protein belongs to the anhydro-N-acetylmuramic acid kinase family.

It catalyses the reaction 1,6-anhydro-N-acetyl-beta-muramate + ATP + H2O = N-acetyl-D-muramate 6-phosphate + ADP + H(+). The protein operates within amino-sugar metabolism; 1,6-anhydro-N-acetylmuramate degradation. It functions in the pathway cell wall biogenesis; peptidoglycan recycling. Catalyzes the specific phosphorylation of 1,6-anhydro-N-acetylmuramic acid (anhMurNAc) with the simultaneous cleavage of the 1,6-anhydro ring, generating MurNAc-6-P. Is required for the utilization of anhMurNAc either imported from the medium or derived from its own cell wall murein, and thus plays a role in cell wall recycling. The sequence is that of Anhydro-N-acetylmuramic acid kinase from Xanthomonas oryzae pv. oryzae (strain MAFF 311018).